The following is a 461-amino-acid chain: uncharacterized protein (461 aa).

The next 13 helical transmembrane spans lie at 13–33 (GIIF…LPFE), 54–74 (ALHV…LGLV), 81–101 (VGFA…ATAL), 120–140 (GNLF…SMWM), 170–190 (VFVL…TLVG), 211–231 (YGLP…YIIF), 256–276 (FIIF…NPFI), 286–306 (IASF…STGV), 314–334 (SNTD…SAVL), 349–369 (FMID…FIIF), 377–397 (TASA…LGMP), 399–419 (IGLA…PVAT), and 439–459 (VGFL…YMFW).

It belongs to the SLC13A/DASS transporter (TC 2.A.47) family. NADC subfamily.

It is found in the cell membrane. This is an uncharacterized protein from Haemophilus influenzae (strain ATCC 51907 / DSM 11121 / KW20 / Rd).